The primary structure comprises 563 residues: Dihydroxy-acid dehydratase (563 aa).

Cysteine 51 provides a ligand contact to [2Fe-2S] cluster. Aspartate 83 is a Mg(2+) binding site. Residue cysteine 124 coordinates [2Fe-2S] cluster. Mg(2+) is bound by residues aspartate 125 and lysine 126. Position 126 is an N6-carboxylysine (lysine 126). Cysteine 196 lines the [2Fe-2S] cluster pocket. Glutamate 448 is a Mg(2+) binding site. Serine 474 (proton acceptor) is an active-site residue.

The protein belongs to the IlvD/Edd family. As to quaternary structure, homodimer. [2Fe-2S] cluster is required as a cofactor. Mg(2+) serves as cofactor.

It catalyses the reaction (2R)-2,3-dihydroxy-3-methylbutanoate = 3-methyl-2-oxobutanoate + H2O. The enzyme catalyses (2R,3R)-2,3-dihydroxy-3-methylpentanoate = (S)-3-methyl-2-oxopentanoate + H2O. It functions in the pathway amino-acid biosynthesis; L-isoleucine biosynthesis; L-isoleucine from 2-oxobutanoate: step 3/4. The protein operates within amino-acid biosynthesis; L-valine biosynthesis; L-valine from pyruvate: step 3/4. Its function is as follows. Functions in the biosynthesis of branched-chain amino acids. Catalyzes the dehydration of (2R,3R)-2,3-dihydroxy-3-methylpentanoate (2,3-dihydroxy-3-methylvalerate) into 2-oxo-3-methylpentanoate (2-oxo-3-methylvalerate) and of (2R)-2,3-dihydroxy-3-methylbutanoate (2,3-dihydroxyisovalerate) into 2-oxo-3-methylbutanoate (2-oxoisovalerate), the penultimate precursor to L-isoleucine and L-valine, respectively. In Polynucleobacter necessarius subsp. necessarius (strain STIR1), this protein is Dihydroxy-acid dehydratase.